The sequence spans 295 residues: Glycine--tRNA ligase alpha subunit (295 aa).

This sequence belongs to the class-II aminoacyl-tRNA synthetase family. In terms of assembly, tetramer of two alpha and two beta subunits.

It is found in the cytoplasm. The enzyme catalyses tRNA(Gly) + glycine + ATP = glycyl-tRNA(Gly) + AMP + diphosphate. This Desulforamulus reducens (strain ATCC BAA-1160 / DSM 100696 / MI-1) (Desulfotomaculum reducens) protein is Glycine--tRNA ligase alpha subunit.